A 79-amino-acid polypeptide reads, in one-letter code: Ferredoxin oxidoreductase 1 subunit ForD (79 aa).

2 consecutive 4Fe-4S ferredoxin-type domains span residues 3–35 and 37–65; these read YVAQ…YTDE and HHAY…RDSI. Residues Cys-12, Cys-17, Cys-20, Cys-24, Cys-46, Cys-49, Cys-52, and Cys-56 each coordinate [4Fe-4S] cluster.

Heterotetramer of one alpha, one beta, one delta and one gamma chain. The cofactor is [4Fe-4S] cluster.

This is Ferredoxin oxidoreductase 1 subunit ForD (forD1) from Aquifex aeolicus (strain VF5).